We begin with the raw amino-acid sequence, 453 residues long: 13-hydroxylupanine O-tigloyltransferase (453 aa).

Residues His166 and Asp385 each act as proton acceptor in the active site.

The protein belongs to the plant acyltransferase family. Monomer. As to expression, expressed in roots and hypocotyls. Detected in seeds, leaves and cotyledons, but not in young developing leaves.

It catalyses the reaction 13-hydroxylupanine + (2E)-2-methylbut-2-enoyl-CoA = 13-(2-methylcrotonoyloxy)lupanine + CoA. Inhibited by N-ethylmaleimide, p-chloromercuribenzoic acid and diethylpyrocarbonate (DEPC). Its function is as follows. Acyl-CoA-dependent acyltransferase involved in the synthesis of lupanine alkaloids. Can use both (-)-13alpha-hydroxymultiflorine and (+)-13alpha-hydroxylupanine as substrates. Lower activity with (-)-3beta, 13alpha-dihydroxylupanine, but no activity with (+)-epilupinine and (-)-lupinine as substrates. Tigloyl-CoA, benzoyl-CoA and, more slowly, acetyl-CoA, propionyl-CoA and 2-butenoyl-CoA can act as acyl donors. This Lupinus albus (White lupine) protein is 13-hydroxylupanine O-tigloyltransferase (HMT/HLT).